Here is a 123-residue protein sequence, read N- to C-terminus: MAKKGNITSRNLRLSDQIQKELAEMIQREIRDPRLGLVTLQSVSLTPDYAHAKVYFTVLGAEPETAAAILKEKAGYLHSLLFKRLHIHTVPTLHFHHDTSVEHAIEMSKLINEANATRAKDDE.

The protein belongs to the RbfA family. As to quaternary structure, monomer. Binds 30S ribosomal subunits, but not 50S ribosomal subunits or 70S ribosomes.

The protein resides in the cytoplasm. Functionally, one of several proteins that assist in the late maturation steps of the functional core of the 30S ribosomal subunit. Associates with free 30S ribosomal subunits (but not with 30S subunits that are part of 70S ribosomes or polysomes). Required for efficient processing of 16S rRNA. May interact with the 5'-terminal helix region of 16S rRNA. This Cupriavidus metallidurans (strain ATCC 43123 / DSM 2839 / NBRC 102507 / CH34) (Ralstonia metallidurans) protein is Ribosome-binding factor A.